A 714-amino-acid chain; its full sequence is Angiogenic factor with G patch and FHA domains 1 (714 aa).

A compositionally biased stretch (pro residues) spans 1–18 (MASEAPSPPRSPPPPTSP). Disordered regions lie at residues 1–22 (MASEAPSPPRSPPPPTSPEPEL), 259–307 (QPYP…HTSC), and 322–384 (IGIH…SYDE). Position 2 is an N-acetylalanine (A2). Phosphoserine is present on residues S7 and S11. Residues 18-88 (PEPELAQLRR…QRGRNEDNKK (71 aa)) adopt a coiled-coil conformation. Positions 279–298 (KDPDSSATNEEKDLNSEDQK) are enriched in basic and acidic residues. A compositionally biased stretch (polar residues) spans 335–355 (VPTSGNTIESPLHENISNSTS). S344 is modified (phosphoserine). Positions 364-383 (TDSEPEEGEITDSQTEDSYD) are enriched in acidic residues. Residues 434-487 (ATIGREKDMEHTLRIPEVGVSKFHAEIYFDHDLQSYVLVDQGSQNGTIVNGKQI) form the FHA domain. The span at 586 to 609 (KYKDRAGKRREQVGSEGTFQRDDA) shows a compositional bias: basic and acidic residues. 2 disordered regions span residues 586-617 (KYKDRAGKRREQVGSEGTFQRDDAPASVHSEI) and 655-714 (RTHA…GTLE). The G-patch domain maps to 619 to 665 (DSNKGRKMLEKMGWKKGEGLGKDGGGMKTPIQLQLRRTHAGLGTGKP). K664 bears the N6-acetyllysine mark. The span at 680-690 (KNWDKARERFT) shows a compositional bias: basic and acidic residues.

In terms of assembly, interacts with the secreted angiogenic factor TNFSF12. Widely expressed. Expressed in endothelial cells, vascular smooth muscle cells and osteoblasts. Expressed in umbilical vein endothelial cells and microvascular endothelial cells.

It localises to the cytoplasm. Its subcellular location is the secreted. Functionally, promotes angiogenesis and the proliferation of endothelial cells. Able to bind to endothelial cells and promote cell proliferation, suggesting that it may act in an autocrine fashion. The sequence is that of Angiogenic factor with G patch and FHA domains 1 (AGGF1) from Homo sapiens (Human).